The chain runs to 414 residues: tRNA(Ile)-lysidine synthase (414 aa).

An ATP-binding site is contributed by 13–18 (SGGIDS).

This sequence belongs to the tRNA(Ile)-lysidine synthase family.

It is found in the cytoplasm. The enzyme catalyses cytidine(34) in tRNA(Ile2) + L-lysine + ATP = lysidine(34) in tRNA(Ile2) + AMP + diphosphate + H(+). Functionally, ligates lysine onto the cytidine present at position 34 of the AUA codon-specific tRNA(Ile) that contains the anticodon CAU, in an ATP-dependent manner. Cytidine is converted to lysidine, thus changing the amino acid specificity of the tRNA from methionine to isoleucine. The polypeptide is tRNA(Ile)-lysidine synthase (Thermotoga maritima (strain ATCC 43589 / DSM 3109 / JCM 10099 / NBRC 100826 / MSB8)).